Reading from the N-terminus, the 261-residue chain is Early 39 kDa protein (261 aa).

The segment at 215 to 261 (SYVPTPVSNKKRRAPPSAPKKIAKQRRDTKPPPTYVSDNTQDTNMSE) is disordered. The span at 250-261 (VSDNTQDTNMSE) shows a compositional bias: polar residues.

This chain is Early 39 kDa protein, found in Orgyia pseudotsugata multicapsid polyhedrosis virus (OpMNPV).